The primary structure comprises 901 residues: Protein translocase subunit SecA 1 (901 aa).

ATP-binding positions include Gln-89, 107–111 (GEGKT), and Asp-502. The segment at 856 to 875 (AEAKASGDARPGFVEDDPST) is disordered. The Zn(2+) site is built by Cys-885, Cys-887, Cys-896, and His-897.

Belongs to the SecA family. As to quaternary structure, monomer and homodimer. Part of the essential Sec protein translocation apparatus which comprises SecA, SecYEG and auxiliary proteins SecDF-YajC and YidC. Requires Zn(2+) as cofactor.

It is found in the cell inner membrane. It localises to the cytoplasm. It catalyses the reaction ATP + H2O + cellular proteinSide 1 = ADP + phosphate + cellular proteinSide 2.. Functionally, part of the Sec protein translocase complex. Interacts with the SecYEG preprotein conducting channel. Has a central role in coupling the hydrolysis of ATP to the transfer of proteins into and across the cell membrane, serving both as a receptor for the preprotein-SecB complex and as an ATP-driven molecular motor driving the stepwise translocation of polypeptide chains across the membrane. The polypeptide is Protein translocase subunit SecA 1 (Ruegeria pomeroyi (strain ATCC 700808 / DSM 15171 / DSS-3) (Silicibacter pomeroyi)).